The following is a 393-amino-acid chain: S-adenosylmethionine synthase 2 (393 aa).

E9 contributes to the Mg(2+) binding site. H15 serves as a coordination point for ATP. K(+) is bound at residue E43. Residues E56 and Q99 each contribute to the L-methionine site. Residues 167-169, 235-238, D246, 252-253, A269, K273, and K277 contribute to the ATP site; these read DGK, SGRF, and RK. Residue D246 participates in L-methionine binding. Residue K277 participates in L-methionine binding.

The protein belongs to the AdoMet synthase family. Homotetramer. It depends on Mn(2+) as a cofactor. Requires Mg(2+) as cofactor. Co(2+) is required as a cofactor. The cofactor is K(+).

It localises to the cytoplasm. It catalyses the reaction L-methionine + ATP + H2O = S-adenosyl-L-methionine + phosphate + diphosphate. It functions in the pathway amino-acid biosynthesis; S-adenosyl-L-methionine biosynthesis; S-adenosyl-L-methionine from L-methionine: step 1/1. Its function is as follows. Catalyzes the formation of S-adenosylmethionine from methionine and ATP. The reaction comprises two steps that are both catalyzed by the same enzyme: formation of S-adenosylmethionine (AdoMet) and triphosphate, and subsequent hydrolysis of the triphosphate. This Elaeagnus umbellata (Autumn olive) protein is S-adenosylmethionine synthase 2 (SAMS2).